The sequence spans 731 residues: MEELIVELRLFLELLDHEYLTSTVREKKAVLTNILLRLQSSKGFEVKDHAQKAEANNLPAPPQMPLPEIPQPWLPPDSGPPPLPTSSLPEGYYEEAVPLSPGKAPEYITSNYDSDAMSSSYESYDEEEEDGKGKKTRHQWPSEEASMDLVKDAKICAFLLRKKRFGQWTKLLCVIKDTKLLCYKSSKDQQPQMELPLQGCSITYIPRDSKKKKHELKITQQGTDPLVLAVQSKEQAEQWLKVIKEAYSGCSGPVDPECSPPPSTSAPVNKAELEKKLSSERPSSDGEGGVENGVTTCNGKEQAKRKKPSKSEAKGTVSKVTGKKITKIIGLGKKKPSTDEQTSSAEEDVPTCGYLNVLSNSRWRERWCRVKDSKLILHKDRADLKTHLVSIPLRGCEVIPGLDSKHPLTFRLLRNGQEVAVLEASSSEDMGRWIGILLAETGSSTDPGALHYDYIDVEMSANVIQTAKQTFCFMNRRAVSTSPYLGSLSNGYAHPSGTALHYDDVPCVNGSLKNKKPPASSNGVPVKGKAPSSQQKKVETAGGVKRTASNAEQYKYGKNRVEADAKRLQSKEEELLKRKEALRNRLAQLRKERKDLRAAIEVNAGRKTQAALEDKLKRLEEECKQREAERVSLELELTEVKESLKKALAGGVTLGLAIEPRSGTSSPQSPVFRHRTLENSPISSCDTSDAEGPLPVNSAAVLKKSQPSSGSSPCRGHVLQKAKEWELKNGT.

Methionine 1 carries the post-translational modification N-acetylmethionine. A disordered region spans residues 56–90 (NNLPAPPQMPLPEIPQPWLPPDSGPPPLPTSSLPE). Residues 59-84 (PAPPQMPLPEIPQPWLPPDSGPPPLP) show a composition bias toward pro residues. Positions 70-73 (PQPW) match the SH3-binding motif. The SH2-binding 1 signature appears at 93–96 (YEEA). The disordered stretch occupies residues 118–139 (SSSYESYDEEEEDGKGKKTRHQ). The 97-residue stretch at 152–248 (DAKICAFLLR…WLKVIKEAYS (97 aa)) folds into the PH 1 domain. Residues 252–318 (GPVDPECSPP…SKSEAKGTVS (67 aa)) are disordered. Basic and acidic residues predominate over residues 271 to 284 (AELEKKLSSERPSS). Serine 283 and serine 284 each carry phosphoserine. The PH 2 domain maps to 348 to 442 (DVPTCGYLNV…WIGILLAETG (95 aa)). The SH2-binding 2 signature appears at 452–457 (YDYIDV). A disordered region spans residues 513–544 (KNKKPPASSNGVPVKGKAPSSQQKKVETAGGV). Position 549 is a phosphoserine (serine 549). Residues 558-649 (KNRVEADAKR…VKESLKKALA (92 aa)) adopt a coiled-coil conformation. Positions 595 to 638 (DLRAAIEVNAGRKTQAALEDKLKRLEEECKQREAERVSLELELT) are interaction with F-actin. A disordered region spans residues 658 to 731 (IEPRSGTSSP…AKEWELKNGT (74 aa)). Phosphoserine is present on residues serine 665, serine 666, and serine 669. Residue threonine 676 is modified to Phosphothreonine. The segment covering 678–687 (ENSPISSCDT) has biased composition (polar residues). A phosphoserine mark is found at serine 680 and serine 688. A compositionally biased stretch (basic and acidic residues) spans 721 to 731 (KAKEWELKNGT).

Monomer and homomultimer. Interacts via its C-terminus with F-actin; probably involving AFAP1 multimers. Interacts with activated SRC SH3-SH2 domains. Interacts via its PH 1 domain with PRKCA, PRKCB and PRKCI. In terms of processing, phosphorylated on tyrosine residues by SRC.

Its subcellular location is the cytoplasm. It localises to the cytoskeleton. The protein localises to the stress fiber. Can cross-link actin filaments into both network and bundle structures. May modulate changes in actin filament integrity and induce lamellipodia formation. May function as an adapter molecule that links other proteins, such as SRC and PKC to the actin cytoskeleton. The polypeptide is Actin filament-associated protein 1 (Afap1) (Mus musculus (Mouse)).